Here is a 39-residue protein sequence, read N- to C-terminus: Cytochrome b559 subunit beta (39 aa).

A helical membrane pass occupies residues 14–30 (WLAVHGLAVPTVFFLGA). Position 18 (His18) interacts with heme.

The protein belongs to the PsbE/PsbF family. As to quaternary structure, heterodimer of an alpha subunit and a beta subunit. PSII is composed of 1 copy each of membrane proteins PsbA, PsbB, PsbC, PsbD, PsbE, PsbF, PsbH, PsbI, PsbJ, PsbK, PsbL, PsbM, PsbT, PsbX, PsbY, PsbZ, Psb30/Ycf12, at least 3 peripheral proteins of the oxygen-evolving complex and a large number of cofactors. It forms dimeric complexes. Heme b is required as a cofactor.

It localises to the plastid. Its subcellular location is the chloroplast thylakoid membrane. This b-type cytochrome is tightly associated with the reaction center of photosystem II (PSII). PSII is a light-driven water:plastoquinone oxidoreductase that uses light energy to abstract electrons from H(2)O, generating O(2) and a proton gradient subsequently used for ATP formation. It consists of a core antenna complex that captures photons, and an electron transfer chain that converts photonic excitation into a charge separation. This chain is Cytochrome b559 subunit beta, found in Physcomitrium patens (Spreading-leaved earth moss).